The sequence spans 59 residues: Large ribosomal subunit protein uL30 (59 aa).

The protein belongs to the universal ribosomal protein uL30 family. Part of the 50S ribosomal subunit.

This chain is Large ribosomal subunit protein uL30, found in Buchnera aphidicola subsp. Acyrthosiphon pisum (strain 5A).